The primary structure comprises 208 residues: Uracil phosphoribosyltransferase (208 aa).

Residues Arg-78, Arg-103, and 130–138 each bind 5-phospho-alpha-D-ribose 1-diphosphate; that span reads DPMLATGGS. Residues Ile-193 and 198–200 contribute to the uracil site; that span reads GDA. Asp-199 contributes to the 5-phospho-alpha-D-ribose 1-diphosphate binding site.

This sequence belongs to the UPRTase family. The cofactor is Mg(2+).

It carries out the reaction UMP + diphosphate = 5-phospho-alpha-D-ribose 1-diphosphate + uracil. It functions in the pathway pyrimidine metabolism; UMP biosynthesis via salvage pathway; UMP from uracil: step 1/1. Its activity is regulated as follows. Allosterically activated by GTP. Functionally, catalyzes the conversion of uracil and 5-phospho-alpha-D-ribose 1-diphosphate (PRPP) to UMP and diphosphate. This Aliivibrio fischeri (strain MJ11) (Vibrio fischeri) protein is Uracil phosphoribosyltransferase.